The sequence spans 1038 residues: Protein transport protein SEC24 A (1038 aa).

The tract at residues 1 to 247 is disordered; that stretch reads MGTENQGYPN…PPHTGGFAQR (247 aa). Positions 22 to 33 are enriched in pro residues; that stretch reads SAPPPGIPPQSG. Zn(2+) contacts are provided by C371, C374, C393, and C396. A zinc finger-like region spans residues 371-396; sequence CRRCRTYVNPFVTFTDSGRKWRCNIC.

The protein belongs to the SEC23/SEC24 family. SEC24 subfamily. As to quaternary structure, component of the coat protein complex II (COPII), composed of at least five proteins: the Sec23/24 complex, the Sec13/31 complex and Sar1. Interacts with SEC221, SEC23E/SEC23A, SEC23B, SEC23G/SEC23C and SEC23F/SEC23D. (Microbial infection) Interacts with turnip mosaic virus (TuMV) 6K2 in COPII-coated vesicles. In terms of tissue distribution, mainly expressed in pollen, leaves, inflorescences, roots and stems, and, to a lower extent, in cotyledons, petioles and hypocotyls.

The protein resides in the cytoplasmic vesicle. It is found in the COPII-coated vesicle membrane. The protein localises to the endoplasmic reticulum membrane. Its subcellular location is the golgi apparatus membrane. It localises to the cytoplasm. The protein resides in the cytosol. Its function is as follows. Essential protein. Component of the coat protein complex II (COPII), that covers ER-derived vesicles involved in transport from the endoplasmic reticulum to the Golgi apparatus. COPII is composed of at least five proteins: the SEC23/24 complex, the SEC13/31 complex, and the protein SAR1. Acts in the cytoplasm to promote the transport of secretory, plasma membrane, and vacuolar proteins from the endoplasmic reticulum to the Golgi complex. Involved in maintaining the dynamic identity of organelles of the early secretory pathway. Regulates cell size patterning, and prevents CDKA;1-, DEK1- and ACR4-dependent endoreduplication and giant cells formation in sepals. Required for male gametophytes (pollen grains) development and transmission. Functionally, (Microbial infection) Contributes to viral systemic infection of turnip mosaic virus (TuMV) by triggering the formation of host endoplasmic reticulum (ER)-derived viral vesicles that carry the viral RNA (vRNA) to plasmodesmata for cell-to-cell viral movement. The sequence is that of Protein transport protein SEC24 A from Arabidopsis thaliana (Mouse-ear cress).